Consider the following 546-residue polypeptide: Membrane protein insertase YidC (546 aa).

A helical transmembrane segment spans residues 8–28 (ILLATVLSVGILILWQVIFPT). The segment at 31 to 70 (VPPKPAPPPAAEVAKPAAPASPAPGAAAPAVPAPPPDAPE) is disordered. The segment covering 41–60 (AEVAKPAAPASPAPGAAAPA) has biased composition (low complexity). The next 5 membrane-spanning stretches (helical) occupy residues 326-346 (IDYG…LYVM), 356-376 (WGVA…PLTY), 422-442 (LGGC…YAAL), 459-479 (LTAH…SFVM), and 498-518 (FFPG…TLYI).

This sequence belongs to the OXA1/ALB3/YidC family. Type 1 subfamily. In terms of assembly, interacts with the Sec translocase complex via SecD. Specifically interacts with transmembrane segments of nascent integral membrane proteins during membrane integration.

It is found in the cell inner membrane. Functionally, required for the insertion and/or proper folding and/or complex formation of integral membrane proteins into the membrane. Involved in integration of membrane proteins that insert both dependently and independently of the Sec translocase complex, as well as at least some lipoproteins. Aids folding of multispanning membrane proteins. This Anaeromyxobacter sp. (strain K) protein is Membrane protein insertase YidC.